The sequence spans 424 residues: Adenylosuccinate synthetase (424 aa).

Residues 12 to 18 (GDEGKGK) and 40 to 42 (GHT) contribute to the GTP site. Catalysis depends on Asp13, which acts as the Proton acceptor. Residues Asp13 and Gly40 each contribute to the Mg(2+) site. IMP is bound by residues 13 to 16 (DEGK), 38 to 41 (NAGH), Thr130, Arg144, Asn220, Thr235, and Arg299. The active-site Proton donor is His41. Residue 295 to 301 (VTTGRRR) participates in substrate binding. Residues Arg301, 327-329 (KLD), and 412-414 (GTG) contribute to the GTP site.

This sequence belongs to the adenylosuccinate synthetase family. As to quaternary structure, homodimer. The cofactor is Mg(2+).

It is found in the cytoplasm. It carries out the reaction IMP + L-aspartate + GTP = N(6)-(1,2-dicarboxyethyl)-AMP + GDP + phosphate + 2 H(+). It functions in the pathway purine metabolism; AMP biosynthesis via de novo pathway; AMP from IMP: step 1/2. In terms of biological role, plays an important role in the de novo pathway and in the salvage pathway of purine nucleotide biosynthesis. Catalyzes the first committed step in the biosynthesis of AMP from IMP. The sequence is that of Adenylosuccinate synthetase from Aspergillus flavus (strain ATCC 200026 / FGSC A1120 / IAM 13836 / NRRL 3357 / JCM 12722 / SRRC 167).